The following is a 173-amino-acid chain: Putative MgpC-like protein MPN_092 (173 aa).

The protein belongs to the MgpC family.

This is Putative MgpC-like protein MPN_092 from Mycoplasma pneumoniae (strain ATCC 29342 / M129 / Subtype 1) (Mycoplasmoides pneumoniae).